Here is a 174-residue protein sequence, read N- to C-terminus: Gamma-crystallin A (174 aa).

2 consecutive Beta/gamma crystallin 'Greek key' domains span residues 2–40 (GKIT…RVDS) and 41–83 (GCWM…RSIP). The tract at residues 84 to 87 (YTSS) is connecting peptide. 2 consecutive Beta/gamma crystallin 'Greek key' domains span residues 88-128 (HRIR…HVLE) and 129-171 (GSWV…RRVM).

Belongs to the beta/gamma-crystallin family.

In terms of biological role, crystallins are the dominant structural components of the vertebrate eye lens. This chain is Gamma-crystallin A (Cryga), found in Rattus norvegicus (Rat).